The sequence spans 100 residues: Small ribosomal subunit protein uS14c (100 aa).

It belongs to the universal ribosomal protein uS14 family. In terms of assembly, part of the 30S ribosomal subunit.

The protein localises to the plastid. It is found in the chloroplast. In terms of biological role, binds 16S rRNA, required for the assembly of 30S particles. The polypeptide is Small ribosomal subunit protein uS14c (Liriodendron tulipifera (Tuliptree)).